Reading from the N-terminus, the 167-residue chain is NAD(P)H-quinone oxidoreductase subunit I, chloroplastic (167 aa).

4Fe-4S ferredoxin-type domains lie at 55-84 (GRIHFEFDKCIACEVCVRVCPIDLPVVDWK) and 95-124 (LNYSIDFGICIFCGNCVEYCPTNCLSMTEE). [4Fe-4S] cluster-binding residues include Cys64, Cys67, Cys70, Cys74, Cys104, Cys107, Cys110, and Cys114.

The protein belongs to the complex I 23 kDa subunit family. NDH is composed of at least 16 different subunits, 5 of which are encoded in the nucleus. [4Fe-4S] cluster serves as cofactor.

The protein resides in the plastid. It is found in the chloroplast thylakoid membrane. It carries out the reaction a plastoquinone + NADH + (n+1) H(+)(in) = a plastoquinol + NAD(+) + n H(+)(out). The catalysed reaction is a plastoquinone + NADPH + (n+1) H(+)(in) = a plastoquinol + NADP(+) + n H(+)(out). NDH shuttles electrons from NAD(P)H:plastoquinone, via FMN and iron-sulfur (Fe-S) centers, to quinones in the photosynthetic chain and possibly in a chloroplast respiratory chain. The immediate electron acceptor for the enzyme in this species is believed to be plastoquinone. Couples the redox reaction to proton translocation, and thus conserves the redox energy in a proton gradient. The chain is NAD(P)H-quinone oxidoreductase subunit I, chloroplastic from Pelargonium hortorum (Common geranium).